Reading from the N-terminus, the 341-residue chain is HTH-type transcriptional repressor PurR (341 aa).

In terms of domain architecture, HTH lacI-type spans Ala2–Val56. Residues Ile4 to Asn23 constitute a DNA-binding region (H-T-H motif). The DNA-binding element occupies Ser48 to Val56. Residues Tyr73, Arg190, Thr192, Phe221, and Asp275 each coordinate hypoxanthine.

As to quaternary structure, homodimer.

The protein operates within purine metabolism; purine nucleotide biosynthesis [regulation]. Functionally, is the main repressor of the genes involved in the de novo synthesis of purine nucleotides, regulating purB, purC, purEK, purF, purHD, purL, purMN and guaBA expression. PurR is allosterically activated to bind its cognate DNA by binding the purine corepressors, hypoxanthine or guanine, thereby effecting transcription repression. The chain is HTH-type transcriptional repressor PurR from Escherichia coli O139:H28 (strain E24377A / ETEC).